The sequence spans 434 residues: Enolase (434 aa).

Residues 29–56 (SGHTGRAAVPSGASTGSREALEMRDGDK) are disordered. A compositionally biased stretch (basic and acidic residues) spans 47–56 (EALEMRDGDK). Q163 lines the (2R)-2-phosphoglycerate pocket. E205 (proton donor) is an active-site residue. Positions 242, 285, and 312 each coordinate Mg(2+). Positions 337, 366, 367, and 388 each coordinate (2R)-2-phosphoglycerate. K337 functions as the Proton acceptor in the catalytic mechanism.

It belongs to the enolase family. Homooctamer. Mg(2+) serves as cofactor.

The protein localises to the cytoplasm. The protein resides in the secreted. Its subcellular location is the cell surface. It catalyses the reaction (2R)-2-phosphoglycerate = phosphoenolpyruvate + H2O. The protein operates within carbohydrate degradation; glycolysis; pyruvate from D-glyceraldehyde 3-phosphate: step 4/5. Its function is as follows. Catalyzes the reversible conversion of 2-phosphoglycerate (2-PG) into phosphoenolpyruvate (PEP). It is essential for the degradation of carbohydrates via glycolysis. The protein is Enolase of Nitratidesulfovibrio vulgaris (strain DSM 19637 / Miyazaki F) (Desulfovibrio vulgaris).